The chain runs to 111 residues: Protein IDA-LIKE 5 (111 aa).

An N-terminal signal peptide occupies residues 1 to 27 (MGNKRIKAMMILVVMIMMVFSWRICEA). The span at 46 to 56 (RRPNPRNHHHQ) shows a compositional bias: basic residues. The segment at 46–65 (RRPNPRNHHHQNQGFNGDDY) is disordered.

In terms of tissue distribution, expressed mainly in flowers. Lower levels in buds and seedlings. Detected in vascular tissues and in hydathodes.

The protein resides in the secreted. The protein localises to the extracellular space. May be involved in floral abscission. In Arabidopsis thaliana (Mouse-ear cress), this protein is Protein IDA-LIKE 5 (IDL5).